A 208-amino-acid chain; its full sequence is Uridine kinase (208 aa).

Residue 12 to 19 (GGSGGGKT) coordinates ATP.

Belongs to the uridine kinase family.

It localises to the cytoplasm. The catalysed reaction is uridine + ATP = UMP + ADP + H(+). It catalyses the reaction cytidine + ATP = CMP + ADP + H(+). Its pathway is pyrimidine metabolism; CTP biosynthesis via salvage pathway; CTP from cytidine: step 1/3. It functions in the pathway pyrimidine metabolism; UMP biosynthesis via salvage pathway; UMP from uridine: step 1/1. The sequence is that of Uridine kinase from Streptococcus equi subsp. equi (strain 4047).